The chain runs to 346 residues: 3-keto-steroid reductase (346 aa).

Residues leucine 20, threonine 43, and lysine 49 each contribute to the NADP(+) site. Catalysis depends on proton donor residues serine 182 and tyrosine 205. NADP(+) contacts are provided by tyrosine 205, lysine 209, and serine 241. Lysine 209 (lowers pKa of active site Tyr) is an active-site residue.

This sequence belongs to the short-chain dehydrogenases/reductases (SDR) family. ERG27 subfamily.

It carries out the reaction a 3beta-hydroxysteroid + NADP(+) = a 3-oxosteroid + NADPH + H(+). Its pathway is steroid biosynthesis; zymosterol biosynthesis; zymosterol from lanosterol: step 5/6. Its function is as follows. Responsible for the reduction of the keto group on the C-3 of sterols. The sequence is that of 3-keto-steroid reductase (ERG27) from Debaryomyces hansenii (strain ATCC 36239 / CBS 767 / BCRC 21394 / JCM 1990 / NBRC 0083 / IGC 2968) (Yeast).